Consider the following 135-residue polypeptide: ATP synthase epsilon chain, chloroplastic (135 aa).

This sequence belongs to the ATPase epsilon chain family. In terms of assembly, F-type ATPases have 2 components, CF(1) - the catalytic core - and CF(0) - the membrane proton channel. CF(1) has five subunits: alpha(3), beta(3), gamma(1), delta(1), epsilon(1). CF(0) has three main subunits: a, b and c.

The protein localises to the plastid. Its subcellular location is the chloroplast thylakoid membrane. Its function is as follows. Produces ATP from ADP in the presence of a proton gradient across the membrane. The protein is ATP synthase epsilon chain, chloroplastic of Stigeoclonium helveticum (Green alga).